The chain runs to 124 residues: Ribonuclease pancreatic (124 aa).

The span at 1 to 13 (KETAAAKFERQHM) shows a compositional bias: basic and acidic residues. The segment at 1–24 (KETAAAKFERQHMDSSTSSASSSN) is disordered. Substrate-binding residues include Lys-7 and Arg-10. Residue His-12 is the Proton acceptor of the active site. Intrachain disulfides connect Cys-26–Cys-84, Cys-40–Cys-95, Cys-58–Cys-110, and Cys-65–Cys-72. Substrate contacts are provided by residues 41–45 (KPVBT), Lys-66, and Arg-85. The active-site Proton donor is His-119.

This sequence belongs to the pancreatic ribonuclease family. In terms of assembly, monomer. Interacts with and forms tight 1:1 complexes with RNH1. Dimerization of two such complexes may occur. Interaction with RNH1 inhibits this protein. In terms of tissue distribution, pancreas.

It localises to the secreted. It carries out the reaction an [RNA] containing cytidine + H2O = an [RNA]-3'-cytidine-3'-phosphate + a 5'-hydroxy-ribonucleotide-3'-[RNA].. The enzyme catalyses an [RNA] containing uridine + H2O = an [RNA]-3'-uridine-3'-phosphate + a 5'-hydroxy-ribonucleotide-3'-[RNA].. In terms of biological role, endonuclease that catalyzes the cleavage of RNA on the 3' side of pyrimidine nucleotides. Acts on single-stranded and double-stranded RNA. The protein is Ribonuclease pancreatic (RNASE1) of Boselaphus tragocamelus (Nilgai).